Reading from the N-terminus, the 333-residue chain is tRNA N6-adenosine threonylcarbamoyltransferase (333 aa).

The Fe cation site is built by histidine 111 and histidine 115. Substrate contacts are provided by residues 134–138, aspartate 167, glycine 180, and asparagine 272; that span reads LVSGG. Aspartate 300 contributes to the Fe cation binding site.

The protein belongs to the KAE1 / TsaD family. It depends on Fe(2+) as a cofactor.

It is found in the cytoplasm. The enzyme catalyses L-threonylcarbamoyladenylate + adenosine(37) in tRNA = N(6)-L-threonylcarbamoyladenosine(37) in tRNA + AMP + H(+). Its function is as follows. Required for the formation of a threonylcarbamoyl group on adenosine at position 37 (t(6)A37) in tRNAs that read codons beginning with adenine. Is involved in the transfer of the threonylcarbamoyl moiety of threonylcarbamoyl-AMP (TC-AMP) to the N6 group of A37, together with TsaE and TsaB. TsaD likely plays a direct catalytic role in this reaction. The sequence is that of tRNA N6-adenosine threonylcarbamoyltransferase from Hamiltonella defensa subsp. Acyrthosiphon pisum (strain 5AT).